The sequence spans 5147 residues: MERLLLLFFLLLAGRESLCQTGDTKLELLAPRGRSYATTYEQYAAFPRRRSSSSSPSGEMQSRAVDTSADFEVLEGQPRGTTVGFIPTKPKFSYRFNEPPREFTLDPVTGEVKTNVVLDREGMRDHYDLVVLSSQPTYPIEVRIKVLDVNDNSPEFPEPSIAISFSESATSGTRLLLDAATDADVGENGVTDQYEIVAGNVDNKFRLVTTANPSGDTSYLHLETTGNLDRESRGSYQLNISARDGGSPPRFGYLQVNVTILDVNDNPPIFDHSDYNVSLNETALPGTPVVTVMASDNDLGDNSKITYYLAETEHQFTVNPETGVISTTERVNCPQQTNVKSSASQKSCVFTVFARDHGSPRQDGRTYVTVNLLDTNDHDPIISFRFFPDGGKVATVDENAVNGTVVAAVAVKDSDSGLNGRTSVRIVSGNELGHFRLEEAADLHIVRVNGVLDREEIGKYNLTVVAMDQGTPARTTTAHLIIDVNDVNDHEPVFEKSEYSAVLSELAPTGSFVASITATDEDTGVNAQVHYDILSGNELKWFSMDPLTGLIVTTGPLDREIRDTVELSISARDGGPNPKFAYTQLKVIILDENDEAPQFSQREQNVTLGEDAPPQTIVALMTATDHDQGTNGSVTFALAPSVERLYPLQFALDALTGQLTTRRPLDREKMSQYEISVIARDQGAPTPQSATATVWLNVADVNDNDPQFYPRHYIYSLADDDDDIKLKKEVEKERILLHVTASDKDDGDNALIEYRLESGGEGLFQLDARSGAISLRGDAPASMHWKPHYKLLVSARDAGQRRSQQDAIVEIVLKSKLEMLECGQAQAGGYEFQMVEDHEQQRNSQPNREVGIVQVKSTNGKANSHIEYDIIQGDRAQNFRIDTRSGRITTARPLDREEQANYRLTILASSSSSSSAAASSVSYGQCIVNIAIIDLNDNAPVFALDRESEPTISLPENAAVGQEIYLSRVRDRDAGVNSRISYSLTNNPNQQFRIGPVTGVLYLQRPIRAEPGSLIHVELMATDAGSPPLSSKLSLSVLIADVNDHTPVFDHTSYETSLPETTKVNTRFFALAATDIDLGDNGRISYEIIEGNTERMFGVFPDGYLFVRAPLDREERDYYALTVSCRDAGQPSRSSVVPVVIHVIDENDNAPQFTNSTFTFSIPENAPADTFVGKLTAVDRDIGRNAELSFTLSSQTQDFTIDTRNGFIKTLRPFDREALVKVSRNAEASGEDGSLRGSMAGNYMLLEATVSDNGIPRLQDKVKVKVIVTDVNDNAPEFLRAPYHVTISEGASEGTHITHVFTQDADEGLNGDVYYSLAKGNEAGQFNLDSATGQLSLGRRLDRESQEIHHLIVVAKDAALKHPLSSNASITIVVLDENDNAPEFTQSSSEVSVLETSPTGTELMRFRASDADQGVNSQVVFSISAGNRRDTFHIDSITGSLYLHKPLDYEDITSYTLNITASDCGTPSLSTTVLYNVLVVDDNDNPPIFPSTAIVRQIKEGIPLKTPIVTVTADDPDSGLNGKVSYAISKQEPQLPQGRHFGINTETGVIHTLREIDRESIDTFRLTVVATDRAQPSERQLSTEKLVTVIVEDINDNAPVFVSMNAAILPPKFSTSKGSSTAVMQVHAKDADSSSNGLVTYEIVSGPQELFKLQRNTGIITFTPGPQFKQEVRYQLTLKSTDEAVQSERRSSEVYITIITPGSGGSESSVPQFEQRSKLSGSVYENEPIGTSILTVTAHLASAEIEYFVTNVTATGSRGQVDRLFDIDAKLGILSTAAELDREAGPEEYEVEVYAIALGGQPRTSRTKVRVTVLDKNDSPPQFLDTPFVYNVSEDLQIGHTISTLRAHDPDTLGSVTFLLMDGHDGKFLLEPSTGKLILNDTLDRETKSKYELRIRVSDGVQYTEAYATIQVSDTNDNPPLFEDTVYSFDIPENAQRGYQVGQIVARDADLGQNAQLSYGVVSDWANDVFSLNPQTGMLTLTARLDYEEVQHYILIVQAQDNGQPSLSTTITVYCNVLDLNDNAPIFDPMSYSSEVFENVPIATEVVTVSAKDIDSGNNGLIEYSITAGDVDSEFGIDSNGTIRTRRNLDREHRSTYTLTVTARDCADEFASFSELEETQLKLKYRSPRKYQQTRQEFLAHQKQQRLSSTVKVTILIKDVNDEVPVFISANETAIMENVAINTVVIAVKAVDNDEGRNGYIDYLMKEARDEDMGQSDPLPFSLNPTDGQLRVVDALDRELRSSYLLNITARDRGEPPQSTESQLLIRILDENDNSPVFDPKQYSASVAENASIGAMVLQVSATDVDEGANGRIRYSIVLGDQNHDFSISEDTGVVRVAKNLNYERLSRYSLTVRAEDCALENPAGDTAELTINILDINDNRPTFLDSPYLARVMENTVPPNGGYVLTVNAYDADTPPLNSQVRYFLKEGDSDLFRINASSGDIALLKPLDREQQSEYTLTLVAMDTGSPPLTGTGIVRVEVQDINDNDPVFELQSYHATVRENLPSGTHVLTPRATDKDEGLNAKLRFNLLGEHMHRFHIDSETGEISTATTLDREETSVYHLTLMAQDSSITEPRASSVNLTISVSDVNDNIPKFDSTTYNVAVPERISKGEFVFGARALDLDDGENAVVHYTISGRDQHYFDINTKTGVVSTKLELKTKTKSHDDLTYTIVISAMDQGEQSLSSKAELTVILRPPELFPTFAYMANSHFAMSEDVRPGKMITKVSATSPKKGLVGKIRYAIAGGIMGDSLRVDPNSGLLSVGQDGLDYELTHLYEIWIEAADGDTPSLRSVTLITLNVTDANDNAPVMEQLIYNAEVLEEESPPQLIAVVKASDRDSGDNGNVIYRLQNDFDGTFEITESGEIYTRMRLDREEIGDYAFVVEAVDQGVPHMTGTASVLLHLLDKNDNPPKFTRLFSLNVTENAEIGSFVIRVTSSDLDLGANANASYSFSENPGEKFRIEPQSGNITVAGHLDREQQDEYILKVVASDGAWRAETPITITIQDQNDNAPEFEHSFYSFSFPELQQSIALVGQIIATDRDKQGPNSVISYSLQQPSPMFSIDPATGEVFSKKAVRFKHSQYVRSPENMYALTVLATDNGKPPLYSECLVNINIVDAHNNPPKFEQAEYLAPLPQDAVRGQRIVRVHANDKQDLGTNEMDYSLMTFNLSSIFSVGRHDGWITLVKPIQVPPNTRYELVVRATDRGVPPQSDETRVVIVVTGENMDTPRFSVNSYQVIVPENEPVGSTILTVGATDDDTGPNGMLRYSISGGNERQDFSVDERTGGIVIQQQLDYDLIQEYHLNITVQDLGYHPLSSVAMLTIILTDVNDNPPVFNHKEYHCYIPENKPVGTFVFQAHAADKDSPKNAIIHYAFLPSGPDRHFFIMNQSNGTISSAVSFDYEERRIYTLQIKAKNPDSSMESYANLYVHVLGVNEFYPQFLQPVFHFDVSETSAVGTRVGAVQATDKDSGEDGRVYYLLVGSSNDKGFRIDTNTGLIYVARHLDRETQNRVVLTVMAKNYGSIRGNDTDEAQVIISIQDGNDPPEFIKHYYTSTISEAAPVGTKVTTVKAIDKDVRTQNNQFSYSIINGNLKQSFKIDVQTGEISTASRLDREETSTYNLVIGAIDTGLPPQTGSATVHIELEDVNDNGPTFTPEGLNGYISENEPAGTSIMTLIASDPDLPRNGGPFTYQLIGGKHKSWLSVDRNSGVVRSTTSFDREMTPILEAIIEVEDSGKPKQKSQHLLTITVLDQNDNPSTTRSLHIAVSLFNGDLPSNVKLADVRPNDIDIVGDYRCRLQKNPAQSQLQLAIPRACDLITTSHTTPIASVFSYTGNDGKHGDVSSKVSVAFQSFNNETLANSVSIMVRNMTAYHFLANHYRPILEMIKSRMSNEDEVILYSLLEGGSGNSTNLQLLMAVRLAKTSYQQPKYLIERLREKRSAFSELLQKEVIVGYEPCSEPDVCENGGVCSATMRLLDAHSFVIQDSPALVLSGPRVVHDYSCQCTSGFSGEQCSRRQDPCLPNPCHSQVQCRRLGSDFQCMCPANRDGKHCEKERSDVCYSKPCRNGGSCQRSPDGSSYFCLCRPGFRGNQCESVSDSCRPNPCLHGGLCVSLKPGYKCNCTPGRYGRHCERFSYGFQPLSYMTFPALDVTTNDISIVFATTKPNSLLLYNYGMQSGGRSDFLAIELVHGRAYFSSGGARTAISTVIAGRNLADGGWHKVTATRNGRVMSLSVAKCADSGDVCTECLPGDSSCYADEVGPVGTLNFNKQPLMIGGLSSADPILERPGQVHSDDLVGCLHSVHIGGRALNLSLPLQQKGILAGCNRQACQPALAAERCGGFAGQCIDRWSSSLCQCGGHLQSPDCSDSLEPITLGEGAFVEFRISEIYRRMQLLDNLYNSKSAWLDNQQMRERRAVSNFSTASQIYEAPKMLSMLFRTYKDQGQILYAATNQMFTSLSLREGRLVYYSKQHLTINMTVQETSTLNDGKWHNVSLFSESRSLRLIVDGRQVGDELDIAGVHDFLDPYLTILNVGGEAFVGCLANVTVNNELQPLNGSGSIFPEVRYHGKIESGCRGDIGQDAAQVADPLSIGFTLVIVFFVILVVAILGSYVIYRFRGKQEKIGSLSCGVPGFKIKHPGGPVTQSQVDHVLVRNLHPSEAPSPPVGAGDHMRPPVGSHHLVGPELLTKKFKEPTAEMPQPQQQQQRPQRPDIIERESPLIREDHHLPIPPLHPLPLEHASSVDMGSEYPEHYDLENASSIAPSDIDIVYHYKGYREAAGLRKYKASVPPVSAYTHHKHQNSGSQQQQQQHRHTAPFVTRNQGGQPPPPPTSASRTHQSTPLARLSPSSELSSQQPRILTLHDISGKPLQSALLATTSSSGGVGKDVHSNSERSLNSPVMSQLSGQSSSASRQKPGVPQQQAQQTSMGLTAEEIERLNGRPRTCSLISTLDAVSSSSEAPRVSSSALHMSLGGDVDAHSSTSTDESGNDSFTCSEIEYDNNSLSGDGKYSTSKSLLDGRSPVSRALSGGETSRNPPTTVVKTPPIPPHAYDGFESSFRGSLSTLVASDDDIANHLSGIYRKANGAASPSATTLGWEYLLNWGPSYENLMGVFKDIAELPDTNGPSQQQQQQTQVVSTLRMPSSNGPAAPEEYV.

An N-terminal signal peptide occupies residues 1–35; the sequence is MERLLLLFFLLLAGRESLCQTGDTKLELLAPRGRS. Cadherin domains are found at residues 36–156, 157–270, 271–382, 383–494, 495–599, 600–708, 709–820, 821–942, 943–1049, 1050–1153, 1154–1278, 1279–1384, 1385–1489, 1490–1601, 1602–1713, 1714–1823, 1824–1922, 1923–2027, 2028–2167, 2168–2278, 2279–2385, 2386–2491, 2492–2596, 2597–2703, 2704–2810, 2811–2913, 2914–3013, 3014–3124, 3125–3229, 3230–3334, 3335–3439, 3440–3545, 3546–3651, and 3652–3756; these read YATT…SPEF, PEPS…PPIF, DHSD…DPII, SFRF…EPVF, EKSE…APQF, SQRE…DPQF, YPRH…LEML, ECGQ…APVF, ALDR…TPVF, DHTS…APQF, TNST…APEF, LRAP…APEF, TQSS…PPIF, PSTA…APVF, VSMN…VPQF, EQRS…PPQF, LDTP…PPLF, EDTV…APIF, DPMS…VPVF, ISAN…SPVF, DPKQ…PTFL, DSPY…DPVF, ELQS…IPKF, DSTT…FPTF, AYMA…APVM, EQLI…PPKF, TRLF…APEF, EHSF…PPKF, EQAE…TPRF, SVNS…PPVF, NHKE…YPQF, LQPV…PPEF, IKHY…GPTF, and TPEG…NPST. Over 36 to 4583 the chain is Extracellular; it reads YATTYEQYAA…GQDAAQVADP (4548 aa). Residues N239, N257, N276, N280, N402, and N461 are each glycosylated (N-linked (GlcNAc...) asparagine). N605 and N631 each carry an N-linked (GlcNAc...) asparagine glycan. N-linked (GlcNAc...) asparagine glycosylation is found at N1155, N1367, and N1458. N-linked (GlcNAc...) asparagine glycans are attached at residues N1751, N1831, and N1880. N2080, N2171, N2247, N2290, N2437, and N2581 each carry an N-linked (GlcNAc...) asparagine glycan. The N-linked (GlcNAc...) asparagine glycan is linked to N2799. Residues N2920, N2946, and N2967 are each glycosylated (N-linked (GlcNAc...) asparagine). 5 N-linked (GlcNAc...) asparagine glycosylation sites follow: N3167, N3303, N3386, N3389, and N3525. Residues N3852, N3865, and N3905 are each glycosylated (N-linked (GlcNAc...) asparagine). 4 EGF-like domains span residues 3950-4011, 4013-4049, 4052-4090, and 4092-4128; these read GYEP…EQCS, RQDP…KHCE, RSDV…NQCE, and VSDS…RHCE. Cystine bridges form between C3954–C3966, C3960–C3999, C4001–C4010, C4017–C4028, C4022–C4037, C4039–C4048, C4056–C4067, C4061–C4078, C4080–C4089, C4096–C4107, C4101–C4116, C4118–C4127, C4294–C4320, C4325–C4341, C4334–C4350, and C4352–C4361. Residues 4129–4320 form the Laminin G-like 1 domain; sequence RFSYGFQPLS…LQQKGILAGC (192 aa). N-linked (GlcNAc...) asparagine glycosylation occurs at N4306. One can recognise an EGF-like 5 domain in the interval 4321-4362; that stretch reads NRQACQPALAAERCGGFAGQCIDRWSSSLCQCGGHLQSPDCS. Positions 4402 to 4569 constitute a Laminin G-like 2 domain; it reads DNQQMRERRA…RYHGKIESGC (168 aa). Residues N4414, N4471, N4487, N4539, and N4550 are each glycosylated (N-linked (GlcNAc...) asparagine). Residues C4536 and C4569 are joined by a disulfide bond. A helical membrane pass occupies residues 4584-4609; the sequence is LSIGFTLVIVFFVILVVAILGSYVIY. At 4610 to 5147 the chain is on the cytoplasmic side; sequence RFRGKQEKIG…NGPAAPEEYV (538 aa). The interval 4744-4771 is essential for stability of mitochondrial electron chain complexes I and V, and promotes interaction with ND-24; that stretch reads PEHYDLENASSIAPSDIDIVYHYKGYRE. 3 disordered regions span residues 4787 to 4850, 4871 to 4921, and 4967 to 5041; these read AYTH…SQQP, TSSS…QTSM, and GDVD…PIPP. Positions 4826-4835 are enriched in polar residues; that stretch reads SASRTHQSTP. 2 stretches are compositionally biased toward low complexity: residues 4838-4850 and 4891-4918; these read RLSP…SQQP and SPVM…QAQQ. Phosphoserine is present on S4843. Over residues 4972–5008 the composition is skewed to polar residues; the sequence is HSSTSTDESGNDSFTCSEIEYDNNSLSGDGKYSTSKS. Residues S5054 and S5061 each carry the phosphoserine modification. Residues 5113-5147 form a disordered region; the sequence is PDTNGPSQQQQQQTQVVSTLRMPSSNGPAAPEEYV. The span at 5119–5131 shows a compositional bias: low complexity; that stretch reads SQQQQQQTQVVST.

As to quaternary structure, interacts with Fbxl7. Ft-mito interacts with NADH dehydrogenase subunit ND-24 and with ATP synthase subunit ATPsynC. Phosphorylated by fj on Ser/Thr of cadherin domains. Phosphorylation by fj enhances binding to ds. Phosphorylated in the cytoplasmic domain in a dco-dependent manner which is promoted by ds. Post-translationally, proteolytically cleaved to yield stably associated N- and C-terminal fragments. The C-terminal fragment is processed further to release a 68 kDa mitochondrial fragment, Ft-mito.

The protein resides in the cell membrane. The protein localises to the apical cell membrane. Its subcellular location is the mitochondrion. Involved in regulation of planar cell polarity in the compound eye where it is required for correct specification of the R3 and R4 photoreceptor cells by regulating Fz activity in the R3/R4 precursor cells. This is likely to occur through creation of an ft gradient so that the equatorial R3/R4 precursor cell has a higher level of ft function than its polar neighbor. Also required for planar cell polarity of wing hairs. Mediates heterophilic cell adhesion in vitro and is required to stabilize ds on the cell surface. Involved in regulation of eye imaginal disk size. Upstream component of the Hippo pathway where it is likely to act as a cell surface receptor involved in regulation of tissue size and is required for the localization and stability of ex. Probably acts as a cell surface receptor for ds. Functionally, regulates mitochondrial electron transport chain integrity and promotes oxidative phosphorylation. This chain is Cadherin-related tumor suppressor, found in Drosophila melanogaster (Fruit fly).